Consider the following 407-residue polypeptide: Multifunctional CCA protein (407 aa).

Positions 8 and 11 each coordinate ATP. CTP is bound by residues Gly-8 and Arg-11. Mg(2+) is bound by residues Asp-21 and Asp-23. Residues Arg-91, Arg-137, and Arg-140 each coordinate ATP. CTP contacts are provided by Arg-91, Arg-137, and Arg-140. Residues 225 to 326 (CGDHVMRVLD…LRLLKDCDAL (102 aa)) enclose the HD domain.

Belongs to the tRNA nucleotidyltransferase/poly(A) polymerase family. Bacterial CCA-adding enzyme type 1 subfamily. As to quaternary structure, monomer. Can also form homodimers and oligomers. Requires Mg(2+) as cofactor. Ni(2+) is required as a cofactor.

It catalyses the reaction a tRNA precursor + 2 CTP + ATP = a tRNA with a 3' CCA end + 3 diphosphate. It carries out the reaction a tRNA with a 3' CCA end + 2 CTP + ATP = a tRNA with a 3' CCACCA end + 3 diphosphate. Its function is as follows. Catalyzes the addition and repair of the essential 3'-terminal CCA sequence in tRNAs without using a nucleic acid template. Adds these three nucleotides in the order of C, C, and A to the tRNA nucleotide-73, using CTP and ATP as substrates and producing inorganic pyrophosphate. tRNA 3'-terminal CCA addition is required both for tRNA processing and repair. Also involved in tRNA surveillance by mediating tandem CCA addition to generate a CCACCA at the 3' terminus of unstable tRNAs. While stable tRNAs receive only 3'-terminal CCA, unstable tRNAs are marked with CCACCA and rapidly degraded. The polypeptide is Multifunctional CCA protein (Chromobacterium violaceum (strain ATCC 12472 / DSM 30191 / JCM 1249 / CCUG 213 / NBRC 12614 / NCIMB 9131 / NCTC 9757 / MK)).